We begin with the raw amino-acid sequence, 300 residues long: Dihydroorotate dehydrogenase B (NAD(+)), catalytic subunit (300 aa).

Residues Ser-21 and 45-46 contribute to the FMN site; that span reads KG. Residues Lys-45 and 69–73 each bind substrate; that span reads NSIGL. Positions 99 and 126 each coordinate FMN. Asn-126 provides a ligand contact to substrate. The Nucleophile role is filled by Cys-129. FMN contacts are provided by Lys-164 and Val-190. 191–192 lines the substrate pocket; that stretch reads NT. Residues Gly-216, 242 to 243, and 264 to 265 each bind FMN; these read GG and GT.

Belongs to the dihydroorotate dehydrogenase family. Type 1 subfamily. In terms of assembly, heterotetramer of 2 PyrK and 2 PyrD type B subunits. Requires FMN as cofactor.

The protein localises to the cytoplasm. The catalysed reaction is (S)-dihydroorotate + NAD(+) = orotate + NADH + H(+). It functions in the pathway pyrimidine metabolism; UMP biosynthesis via de novo pathway; orotate from (S)-dihydroorotate (NAD(+) route): step 1/1. Its function is as follows. Catalyzes the conversion of dihydroorotate to orotate with NAD(+) as electron acceptor. This chain is Dihydroorotate dehydrogenase B (NAD(+)), catalytic subunit (pyrD), found in Petrotoga mobilis (strain DSM 10674 / SJ95).